The primary structure comprises 686 residues: Methionine--tRNA ligase (686 aa).

The 'HIGH' region motif lies at 22–32; it reads PYANGPIHLGH. Cys153, Cys156, Cys166, and Cys169 together coordinate Zn(2+). The 'KMSKS' region motif lies at 337-341; the sequence is KMSKS. Lys340 serves as a coordination point for ATP. The segment at 547–573 is disordered; sequence MLEDSKESTPAPAAAKPKKAATQKADA. A tRNA-binding domain is found at 584–686; sequence DFLKVKLRVA…SGAEPGMEVR (103 aa).

It belongs to the class-I aminoacyl-tRNA synthetase family. MetG type 1 subfamily. Homodimer. Requires Zn(2+) as cofactor.

It localises to the cytoplasm. It catalyses the reaction tRNA(Met) + L-methionine + ATP = L-methionyl-tRNA(Met) + AMP + diphosphate. In terms of biological role, is required not only for elongation of protein synthesis but also for the initiation of all mRNA translation through initiator tRNA(fMet) aminoacylation. This Alcanivorax borkumensis (strain ATCC 700651 / DSM 11573 / NCIMB 13689 / SK2) protein is Methionine--tRNA ligase.